Consider the following 605-residue polypeptide: Glutamine--fructose-6-phosphate aminotransferase [isomerizing] (605 aa).

Cysteine 2 (nucleophile; for GATase activity) is an active-site residue. A Glutamine amidotransferase type-2 domain is found at 2–219 (CGIVGVVGSK…DKELVVLTKD (218 aa)). SIS domains follow at residues 285–424 (IIKG…AEGE) and 457–595 (VADL…VDKP). The For Fru-6P isomerization activity role is filled by lysine 600.

In terms of assembly, homodimer.

The protein resides in the cytoplasm. It catalyses the reaction D-fructose 6-phosphate + L-glutamine = D-glucosamine 6-phosphate + L-glutamate. Catalyzes the first step in hexosamine metabolism, converting fructose-6P into glucosamine-6P using glutamine as a nitrogen source. This chain is Glutamine--fructose-6-phosphate aminotransferase [isomerizing], found in Lactococcus lactis subsp. lactis (strain IL1403) (Streptococcus lactis).